Here is a 156-residue protein sequence, read N- to C-terminus: SsrA-binding protein (156 aa).

Residues 131 to 156 (YDKRQTLREQQDKREALRVMRERNRG) are disordered.

This sequence belongs to the SmpB family.

It is found in the cytoplasm. Functionally, required for rescue of stalled ribosomes mediated by trans-translation. Binds to transfer-messenger RNA (tmRNA), required for stable association of tmRNA with ribosomes. tmRNA and SmpB together mimic tRNA shape, replacing the anticodon stem-loop with SmpB. tmRNA is encoded by the ssrA gene; the 2 termini fold to resemble tRNA(Ala) and it encodes a 'tag peptide', a short internal open reading frame. During trans-translation Ala-aminoacylated tmRNA acts like a tRNA, entering the A-site of stalled ribosomes, displacing the stalled mRNA. The ribosome then switches to translate the ORF on the tmRNA; the nascent peptide is terminated with the 'tag peptide' encoded by the tmRNA and targeted for degradation. The ribosome is freed to recommence translation, which seems to be the essential function of trans-translation. This Arthrobacter sp. (strain FB24) protein is SsrA-binding protein.